Reading from the N-terminus, the 138-residue chain is Nucleoside diphosphate kinase (138 aa).

Residues Lys-9, Phe-57, Arg-85, Thr-91, Arg-102, and Asn-112 each coordinate ATP. The active-site Pros-phosphohistidine intermediate is the His-115.

This sequence belongs to the NDK family. In terms of assembly, homotetramer. Mg(2+) serves as cofactor.

Its subcellular location is the cytoplasm. The enzyme catalyses a 2'-deoxyribonucleoside 5'-diphosphate + ATP = a 2'-deoxyribonucleoside 5'-triphosphate + ADP. It catalyses the reaction a ribonucleoside 5'-diphosphate + ATP = a ribonucleoside 5'-triphosphate + ADP. Functionally, major role in the synthesis of nucleoside triphosphates other than ATP. The ATP gamma phosphate is transferred to the NDP beta phosphate via a ping-pong mechanism, using a phosphorylated active-site intermediate. In Desulforapulum autotrophicum (strain ATCC 43914 / DSM 3382 / VKM B-1955 / HRM2) (Desulfobacterium autotrophicum), this protein is Nucleoside diphosphate kinase.